Here is a 397-residue protein sequence, read N- to C-terminus: Riboflavin biosynthesis protein RibBA (397 aa).

The DHBP synthase stretch occupies residues 1–199; that stretch reads MFHRIEEALE…IEDLIAYRRH (199 aa). D-ribulose 5-phosphate-binding positions include 26-27, D31, 138-142, and E162; these read RE and RAGHT. Mg(2+) is bound at residue E27. Residue H141 participates in Mg(2+) binding. The segment at 200–397 is GTP cyclohydrolase II; that stretch reads HETLVTREVE…VNKLGHLLNL (198 aa). 250–254 is a GTP binding site; sequence RVHSE. Residues C255, C266, and C268 each contribute to the Zn(2+) site. GTP-binding positions include Q271, 293 to 295, and T315; that span reads EGR. D327 serves as the catalytic Proton acceptor; for GTP cyclohydrolase activity. The active-site Nucleophile; for GTP cyclohydrolase activity is the R329. Residues T350 and K355 each coordinate GTP.

The protein in the N-terminal section; belongs to the DHBP synthase family. It in the C-terminal section; belongs to the GTP cyclohydrolase II family. Mg(2+) serves as cofactor. It depends on Mn(2+) as a cofactor. Zn(2+) is required as a cofactor.

It carries out the reaction D-ribulose 5-phosphate = (2S)-2-hydroxy-3-oxobutyl phosphate + formate + H(+). It catalyses the reaction GTP + 4 H2O = 2,5-diamino-6-hydroxy-4-(5-phosphoribosylamino)-pyrimidine + formate + 2 phosphate + 3 H(+). It functions in the pathway cofactor biosynthesis; riboflavin biosynthesis; 2-hydroxy-3-oxobutyl phosphate from D-ribulose 5-phosphate: step 1/1. Its pathway is cofactor biosynthesis; riboflavin biosynthesis; 5-amino-6-(D-ribitylamino)uracil from GTP: step 1/4. Its function is as follows. Catalyzes the conversion of D-ribulose 5-phosphate to formate and 3,4-dihydroxy-2-butanone 4-phosphate. Catalyzes the conversion of GTP to 2,5-diamino-6-ribosylamino-4(3H)-pyrimidinone 5'-phosphate (DARP), formate and pyrophosphate. This chain is Riboflavin biosynthesis protein RibBA, found in Bacillus cereus (strain AH187).